Reading from the N-terminus, the 1120-residue chain is Probable leucine-rich repeat receptor-like protein kinase At1g35710 (1120 aa).

An N-terminal signal peptide occupies residues 1–29; sequence MGFAEKNLYDFRFLLFISIILSCSISASA. Residues 30-783 lie on the Extracellular side of the membrane; it reads TIAEANALLK…RELKKPKKNG (754 aa). N-linked (GlcNAc...) asparagine glycans are attached at residues N46, N60, N83, and N124. LRR repeat units follow at residues 78 to 100, 103 to 125, 127 to 150, 151 to 172, 175 to 198, 199 to 221, 223 to 246, 247 to 269, 271 to 294, 295 to 317, 319 to 342, 343 to 365, 367 to 389, 391 to 412, 415 to 437, 439 to 461, 463 to 484, 487 to 510, 535 to 557, 559 to 581, 583 to 605, 607 to 630, 631 to 652, 655 to 677, 678 to 701, 702 to 723, and 726 to 748; these read SIEE…PFIS, NLAY…FGNL, KLIY…GNLK, NLTV…ELGN, SMTD…GNLK, NLMV…LGNM, NLMV…IGNM, SMTN…GNLK, NLTL…LGNI, SMID…GNLK, NLTI…LGNM, SMID…FGNL, NLTY…ELGN, SMIN…FGNF, KLES…VANS, HLTT…TVCK, KLQN…RDCK, DLNF…WEKS, KLGA…IWNM, QLVE…IGNL, NLSR…SFLT, NLES…TFDS, KLHD…SKLT, QLTQ…SSLQ, SLDK…TFEG, and ALTN…PTFR. N151 carries N-linked (GlcNAc...) asparagine glycosylation. N295 carries N-linked (GlcNAc...) asparagine glycosylation. An N-linked (GlcNAc...) asparagine glycan is attached at N343. N-linked (GlcNAc...) asparagine glycosylation is found at N391, N436, N460, N473, and N490. N569, N580, N604, N607, N641, and N660 each carry an N-linked (GlcNAc...) asparagine glycan. A glycan (N-linked (GlcNAc...) asparagine) is linked at N712. The helical transmembrane segment at 784–804 threads the bilayer; sequence NLVVWILVPILGVLVILSICA. Over 805-1120 the chain is Cytoplasmic; that stretch reads NTFTYCIRKR…TMLSISTTFS (316 aa). Position 848 is a phosphothreonine (T848). Residues 851–1120 form the Protein kinase domain; the sequence is FDPTHLIGTG…TMLSISTTFS (270 aa). ATP contacts are provided by residues 857-865 and K878; that span reads IGTGGYSKV. Y929 and Y968 each carry phosphotyrosine. The Proton acceptor role is filled by D981. Residue S1014 is modified to Phosphoserine. Phosphotyrosine is present on residues Y1022 and Y1029. At T1030 the chain carries Phosphothreonine.

Belongs to the protein kinase superfamily. Ser/Thr protein kinase family.

It localises to the membrane. It carries out the reaction L-seryl-[protein] + ATP = O-phospho-L-seryl-[protein] + ADP + H(+). The enzyme catalyses L-threonyl-[protein] + ATP = O-phospho-L-threonyl-[protein] + ADP + H(+). The protein is Probable leucine-rich repeat receptor-like protein kinase At1g35710 of Arabidopsis thaliana (Mouse-ear cress).